A 202-amino-acid chain; its full sequence is Cold-regulated 413 plasma membrane protein 4 (202 aa).

Over 1-42 the chain is Extracellular; the sequence is MGRGEFLAMKTEENAANLINSDMNEFVAAAKKLVKDVGMLGG. Residues 43 to 63 traverse the membrane as a helical segment; sequence VGFGTSVLQWAASIFAIYLLI. Topologically, residues 64 to 72 are cytoplasmic; it reads LDRTNWKTK. A helical transmembrane segment spans residues 73-93; sequence MLTTLLVPYIFFTLPSVIFQF. Topologically, residues 94–97 are extracellular; sequence FSGD. A helical transmembrane segment spans residues 98-118; it reads FGKWIALIAIIVRLFFPKEFP. A topological domain (cytoplasmic) is located at residue E119. The helical transmembrane segment at 120 to 140 threads the bilayer; sequence WLEIPVALILIVVVSPSLIAW. The Extracellular portion of the chain corresponds to 141–145; it reads TLRES. The chain crosses the membrane as a helical span at residues 146-166; it reads WVGAVICLVIACYLFHEHIKA. At 167–181 the chain is on the cytoplasmic side; sequence SGGFKNSFTQKNGIS. Residues 182–202 form a helical membrane-spanning segment; it reads NTIGIVALLVYPVWTIFFHIF.

Belongs to the Cold-regulated 413 protein family.

The protein resides in the cell membrane. This Arabidopsis thaliana (Mouse-ear cress) protein is Cold-regulated 413 plasma membrane protein 4.